The primary structure comprises 397 residues: Leucine carboxyl methyltransferase 1 (397 aa).

The interval 17–61 (AIQTPPPTDPNAAPAHRPAPRPALGRCRPPHRRRRRLRPPVRPPL) is disordered. Residues 26–43 (PNAAPAHRPAPRPALGRC) show a composition bias toward low complexity. Over residues 44–55 (RPPHRRRRRLRP) the composition is skewed to basic residues. S-adenosyl-L-methionine contacts are provided by residues arginine 119, glycine 142, aspartate 168, 224-225 (DL), and glutamate 259.

Belongs to the methyltransferase superfamily. LCMT family.

The catalysed reaction is [phosphatase 2A protein]-C-terminal L-leucine + S-adenosyl-L-methionine = [phosphatase 2A protein]-C-terminal L-leucine methyl ester + S-adenosyl-L-homocysteine. Functionally, methylates the carboxyl group of the C-terminal leucine residue of protein phosphatase 2A catalytic subunits to form alpha-leucine ester residues. In Cryptococcus neoformans var. neoformans serotype D (strain B-3501A) (Filobasidiella neoformans), this protein is Leucine carboxyl methyltransferase 1 (PPM1).